The chain runs to 456 residues: Ezy-1 protein (456 aa).

A signal peptide spans 1 to 28; it reads MQLSSSLRSARSAAASSGCALASRPVVA. 3 disordered regions span residues 167 to 189, 273 to 310, and 414 to 456; these read SDGG…DGDG, FTGK…GGSG, and QPAG…SPNM. Positions 281–293 are enriched in acidic residues; the sequence is AEGDDGEDEEEGE. A compositionally biased stretch (basic and acidic residues) spans 418–428; that stretch reads DGHEPEPKRPE.

This Chlamydomonas reinhardtii (Chlamydomonas smithii) protein is Ezy-1 protein (Ezy-1).